The chain runs to 416 residues: Nucleoside transporter 1 (416 aa).

Residues 1-26 are compositionally biased toward basic and acidic residues; it reads MSISKESSKTMIDIEKKGGEGKDGKG. The tract at residues 1-28 is disordered; it reads MSISKESSKTMIDIEKKGGEGKDGKGGS. The Cytoplasmic portion of the chain corresponds to 1 to 35; sequence MSISKESSKTMIDIEKKGGEGKDGKGGSKMTKNEQ. A helical membrane pass occupies residues 36–58; sequence FLLPFTFILIGLSSLNVWNTALG. Residues 59-64 lie on the Extracellular side of the membrane; sequence LNINFK. A helical membrane pass occupies residues 65–83; the sequence is YNTFQITGLVCSSIIALFV. Over 84–87 the chain is Cytoplasmic; that stretch reads KVPK. The helical transmembrane segment at 88-107 threads the bilayer; sequence MLLPFALGGLAMLCAGFQIA. Topologically, residues 108–119 are extracellular; the sequence is HQCFTFEQFDTY. Residues 120–139 form a helical membrane-spanning segment; it reads CLIAFIVIGIMAGLAQTIAF. The Cytoplasmic segment spans residues 140 to 148; that stretch reads SVGTTMEEN. Residues 149 to 171 traverse the membrane as a helical segment; the sequence is MGGYMSAGIGISGVFIFIINLLL. The Extracellular portion of the chain corresponds to 172–187; sequence DQIVPDQKKFNVNEAK. Residues 188–210 traverse the membrane as a helical segment; sequence LLYLFLICELCLVLAIIFSVCNL. Residues 211-241 are Cytoplasmic-facing; that stretch reads ELSSSKTSKEEEYSDKEQGLSYLELLKDSYK. The helical transmembrane segment at 242–261 threads the bilayer; sequence AILAMFLVNWLSLQLFPGVG. Over 262-273 the chain is Extracellular; the sequence is HKKWQESHNISD. The helical transmembrane segment at 274-292 threads the bilayer; it reads YNVTLIVGMFQVFDFVSRY. The Cytoplasmic segment spans residues 293–311; sequence PPNLSHMKIFKWFTFSLNK. A helical membrane pass occupies residues 312 to 331; sequence LLLLNFLRLLFIPWFVINAA. The Extracellular segment spans residues 332–343; it reads CDLPIFTNIVQQ. Residues 344–366 traverse the membrane as a helical segment; that stretch reads CVCMAMLAFTNGWFNTVPFLVFV. Topologically, residues 367 to 380 are cytoplasmic; it reads QELKKAKKKKDIET. The helical transmembrane segment at 381–403 threads the bilayer; it reads ISTFLVVAMFVGLFMGIWTTYIY. Over 404–416 the chain is Extracellular; the sequence is DFFPIVIKRYVVP.

This sequence belongs to the SLC29A/ENT transporter (TC 2.A.57) family.

The protein resides in the cell membrane. The catalysed reaction is inosine(in) = inosine(out). It catalyses the reaction adenosine(in) = adenosine(out). The enzyme catalyses hypoxanthine(out) = hypoxanthine(in). It carries out the reaction guanosine(in) = guanosine(out). The catalysed reaction is guanine(out) = guanine(in). It catalyses the reaction thymidine(in) = thymidine(out). The enzyme catalyses uridine(out) = uridine(in). It carries out the reaction uracil(in) = uracil(out). The catalysed reaction is thymine(out) = thymine(in). It catalyses the reaction adenine(out) = adenine(in). The enzyme catalyses cytosine(out) = cytosine(in). It carries out the reaction xanthine(out) = xanthine(in). Functionally, nucleoside and nucleobase transporter with a broad substrate specificity. The protein is Nucleoside transporter 1 of Plasmodium vivax (strain Salvador I).